The primary structure comprises 123 residues: Large ribosomal subunit protein eL8 (123 aa).

This sequence belongs to the eukaryotic ribosomal protein eL8 family. Part of the 50S ribosomal subunit. Probably part of the RNase P complex.

It is found in the cytoplasm. Functionally, multifunctional RNA-binding protein that recognizes the K-turn motif in ribosomal RNA, the RNA component of RNase P, box H/ACA, box C/D and box C'/D' sRNAs. The chain is Large ribosomal subunit protein eL8 from Thermococcus gammatolerans (strain DSM 15229 / JCM 11827 / EJ3).